A 211-amino-acid chain; its full sequence is Arginine exporter protein ArgO (211 aa).

6 helical membrane passes run 1-21 (MISY…PLGP), 37-57 (LMIA…GIFG), 68-88 (LLAL…FGAL), 111-131 (IIAT…DTFV), 147-167 (WFAL…ALLA), and 179-199 (AQRI…FQLA).

It belongs to the LysE/ArgO transporter (TC 2.A.75) family.

Its subcellular location is the cell inner membrane. It catalyses the reaction L-arginine(in) = L-arginine(out). Involved in the export of arginine. Important to control the intracellular level of arginine and the correct balance between arginine and lysine. The sequence is that of Arginine exporter protein ArgO from Salmonella paratyphi A (strain ATCC 9150 / SARB42).